We begin with the raw amino-acid sequence, 452 residues long: Pup--protein ligase (452 aa).

E9 provides a ligand contact to Mg(2+). R53 lines the ATP pocket. Residue Y55 participates in Mg(2+) binding. Residue D57 is the Proton acceptor of the active site. Position 63 (E63) interacts with Mg(2+). The ATP site is built by T66 and W419.

Belongs to the Pup ligase/Pup deamidase family. Pup-conjugating enzyme subfamily.

The catalysed reaction is ATP + [prokaryotic ubiquitin-like protein]-L-glutamate + [protein]-L-lysine = ADP + phosphate + N(6)-([prokaryotic ubiquitin-like protein]-gamma-L-glutamyl)-[protein]-L-lysine.. It participates in protein degradation; proteasomal Pup-dependent pathway. The protein operates within protein modification; protein pupylation. Functionally, catalyzes the covalent attachment of the prokaryotic ubiquitin-like protein modifier Pup to the proteasomal substrate proteins, thereby targeting them for proteasomal degradation. This tagging system is termed pupylation. The ligation reaction involves the side-chain carboxylate of the C-terminal glutamate of Pup and the side-chain amino group of a substrate lysine. The protein is Pup--protein ligase of Streptosporangium roseum (strain ATCC 12428 / DSM 43021 / JCM 3005 / KCTC 9067 / NCIMB 10171 / NRRL 2505 / NI 9100).